We begin with the raw amino-acid sequence, 152 residues long: Regulator of G-protein signaling 21 (152 aa).

One can recognise an RGS domain in the interval Asn-21–Val-137.

Expressed ubiquitously.

Functionally, inhibits signal transduction by increasing the GTPase activity of G protein alpha subunits thereby driving them into their inactive GDP-bound form. This Homo sapiens (Human) protein is Regulator of G-protein signaling 21 (RGS21).